The following is a 204-amino-acid chain: Imidazoleglycerol-phosphate dehydratase (204 aa).

This sequence belongs to the imidazoleglycerol-phosphate dehydratase family.

It is found in the cytoplasm. It catalyses the reaction D-erythro-1-(imidazol-4-yl)glycerol 3-phosphate = 3-(imidazol-4-yl)-2-oxopropyl phosphate + H2O. It functions in the pathway amino-acid biosynthesis; L-histidine biosynthesis; L-histidine from 5-phospho-alpha-D-ribose 1-diphosphate: step 6/9. The sequence is that of Imidazoleglycerol-phosphate dehydratase from Rhodococcus opacus (strain B4).